We begin with the raw amino-acid sequence, 298 residues long: Ribosomal RNA small subunit methyltransferase H (298 aa).

Residues 35–37, D55, F82, D100, and Q107 each bind S-adenosyl-L-methionine; that span reads GGH.

Belongs to the methyltransferase superfamily. RsmH family.

The protein resides in the cytoplasm. The catalysed reaction is cytidine(1402) in 16S rRNA + S-adenosyl-L-methionine = N(4)-methylcytidine(1402) in 16S rRNA + S-adenosyl-L-homocysteine + H(+). Functionally, specifically methylates the N4 position of cytidine in position 1402 (C1402) of 16S rRNA. The polypeptide is Ribosomal RNA small subunit methyltransferase H (Chlamydia felis (strain Fe/C-56) (Chlamydophila felis)).